Consider the following 279-residue polypeptide: Probable endonuclease 4 (279 aa).

The Zn(2+) site is built by His69, His109, Glu145, Asp179, His182, His216, Asp229, His231, and Glu261.

The protein belongs to the AP endonuclease 2 family. Requires Zn(2+) as cofactor.

It carries out the reaction Endonucleolytic cleavage to 5'-phosphooligonucleotide end-products.. Functionally, endonuclease IV plays a role in DNA repair. It cleaves phosphodiester bonds at apurinic or apyrimidinic (AP) sites, generating a 3'-hydroxyl group and a 5'-terminal sugar phosphate. The polypeptide is Probable endonuclease 4 (Chlorobium luteolum (strain DSM 273 / BCRC 81028 / 2530) (Pelodictyon luteolum)).